Reading from the N-terminus, the 429-residue chain is Glutamate-1-semialdehyde 2,1-aminomutase (429 aa).

Lysine 265 is modified (N6-(pyridoxal phosphate)lysine).

Belongs to the class-III pyridoxal-phosphate-dependent aminotransferase family. HemL subfamily. As to quaternary structure, homodimer. Requires pyridoxal 5'-phosphate as cofactor.

The protein resides in the cytoplasm. The catalysed reaction is (S)-4-amino-5-oxopentanoate = 5-aminolevulinate. It functions in the pathway porphyrin-containing compound metabolism; protoporphyrin-IX biosynthesis; 5-aminolevulinate from L-glutamyl-tRNA(Glu): step 2/2. This chain is Glutamate-1-semialdehyde 2,1-aminomutase, found in Acidobacterium capsulatum (strain ATCC 51196 / DSM 11244 / BCRC 80197 / JCM 7670 / NBRC 15755 / NCIMB 13165 / 161).